The sequence spans 117 residues: V-type proton ATPase subunit G (117 aa).

It belongs to the V-ATPase G subunit family. V-ATPase is a heteromultimeric enzyme made up of two complexes: the ATP-hydrolytic V1 complex and the proton translocation V0 complex. The V1 complex consists of three catalytic AB heterodimers that form a heterohexamer, three peripheral stalks each consisting of EG heterodimers, one central rotor including subunits D and F, and the regulatory subunits C and H. The proton translocation complex V0 consists of the proton transport subunit a, a ring of proteolipid subunits c9c'', rotary subunit d, subunits e and f, and the accessory subunits VhaAC45 and ATP6AP2.

In terms of biological role, subunit of the V1 complex of vacuolar(H+)-ATPase (V-ATPase), a multisubunit enzyme composed of a peripheral complex (V1) that hydrolyzes ATP and a membrane integral complex (V0) that translocates protons. V-ATPase is responsible for acidifying and maintaining the pH of intracellular compartments and in some cell types, is targeted to the plasma membrane, where it is responsible for acidifying the extracellular environment. In enterocytes, acts as part of a pHCl-2 sensory pathway which mediates Tor-dependent larval growth and metabolism in response to zinc availability. Likely acts in maintaining enterocyte lysosomal acidification which consequently promotes Tor activation at the lysosome membrane. This Drosophila melanogaster (Fruit fly) protein is V-type proton ATPase subunit G (Vha13).